Here is a 214-residue protein sequence, read N- to C-terminus: Probable transaldolase (214 aa).

The Schiff-base intermediate with substrate role is filled by K83.

Belongs to the transaldolase family. Type 3B subfamily.

Its subcellular location is the cytoplasm. It carries out the reaction D-sedoheptulose 7-phosphate + D-glyceraldehyde 3-phosphate = D-erythrose 4-phosphate + beta-D-fructose 6-phosphate. Its pathway is carbohydrate degradation; pentose phosphate pathway; D-glyceraldehyde 3-phosphate and beta-D-fructose 6-phosphate from D-ribose 5-phosphate and D-xylulose 5-phosphate (non-oxidative stage): step 2/3. Functionally, transaldolase is important for the balance of metabolites in the pentose-phosphate pathway. The protein is Probable transaldolase of Brevibacillus brevis (strain 47 / JCM 6285 / NBRC 100599).